The chain runs to 170 residues: Transcription factor E (170 aa).

The HTH TFE/IIEalpha-type domain occupies 1–93 (MKDAYLYVVE…AWYVDDEIIR (93 aa)).

The protein belongs to the TFE family. In terms of assembly, monomer. Interaction with RNA polymerase subunits RpoF and RpoE is necessary for Tfe stimulatory transcription activity. Able to interact with Tbp and RNA polymerase in the absence of DNA promoter. Interacts both with the preinitiation and elongation complexes.

Its function is as follows. Transcription factor that plays a role in the activation of archaeal genes transcribed by RNA polymerase. Facilitates transcription initiation by enhancing TATA-box recognition by TATA-box-binding protein (Tbp), and transcription factor B (Tfb) and RNA polymerase recruitment. Not absolutely required for transcription in vitro, but particularly important in cases where Tbp or Tfb function is not optimal. It dynamically alters the nucleic acid-binding properties of RNA polymerases by stabilizing the initiation complex and destabilizing elongation complexes. Seems to translocate with the RNA polymerase following initiation and acts by binding to the non template strand of the transcription bubble in elongation complexes. This is Transcription factor E from Pyrobaculum arsenaticum (strain DSM 13514 / JCM 11321 / PZ6).